The sequence spans 339 residues: Cathepsin B (339 aa).

Residues 1-17 (MWWSLIPLSCLLALTSA) form the signal peptide. Positions 18 to 79 (HDKPSSHPLS…ERVGFSEDIN (62 aa)) are cleaved as a propeptide — activation peptide. Cystine bridges form between Cys93–Cys122, Cys105–Cys150, Cys141–Cys207, Cys142–Cys146, Cys179–Cys211, and Cys187–Cys198. Cys108 is an active-site residue. Residue Asn192 is glycosylated (N-linked (GlcNAc...) asparagine). Lys220 is subject to N6-acetyllysine. Catalysis depends on residues His278 and Asn298. Positions 334-339 (QYWGRF) are excised as a propeptide.

Belongs to the peptidase C1 family. Dimer of a heavy chain and a light chain cross-linked by a disulfide bond. Interacts with SRPX2. Directly interacts with SHKBP1. As to expression, expressed in the epithelial cells of the prostate and mammary gland.

It localises to the lysosome. The protein resides in the melanosome. The protein localises to the secreted. Its subcellular location is the extracellular space. It is found in the apical cell membrane. The catalysed reaction is Hydrolysis of proteins with broad specificity for peptide bonds. Preferentially cleaves -Arg-Arg-|-Xaa bonds in small molecule substrates (thus differing from cathepsin L). In addition to being an endopeptidase, shows peptidyl-dipeptidase activity, liberating C-terminal dipeptides.. Its function is as follows. Thiol protease which is believed to participate in intracellular degradation and turnover of proteins. Cleaves matrix extracellular phosphoglycoprotein MEPE. Involved in the solubilization of cross-linked TG/thyroglobulin in the thyroid follicle lumen. Has also been implicated in tumor invasion and metastasis. This is Cathepsin B (Ctsb) from Rattus norvegicus (Rat).